The following is a 422-amino-acid chain: MTDYQNEVLEFERIMKEHTNYMRNSINLIASENITSSDVTEAVASDLAHRYAEGQSHERLYEGCQYIDEIEDRVIDLSKKLFNVDYANVQPISGVTANLAAFFGYSDYGDKLMALDVPYGGHISHAKVSAAGIAGLKTISHPFDKDIMNIDIDAMNKKILEEKPKIVLFGGSLFLFPHPVKEAREAADEVGAKIMYDAAHVLGLIAGGQFQQPIAEGADLMMGSTHKSFPGPQGGIILSHKENKEVIDNAVFPGVVSNHHLHHLAGLGIASAEMLEFGQDYAKQIVKNSKALAQSLYERGFDVLCEELGFTESHQLAINVSNIRSASDIAHDLANNDVILNKNLLPGDNVDDSDNPSGLRIGTQEITRRGLKEKEMDEVAEFIKRVAVDKENIKDEVREFMDQYTTVHYSFSQNEGYRFHKL.

A (6S)-5,6,7,8-tetrahydrofolate-binding site is contributed by 121 to 123; sequence GHI. At Lys227 the chain carries N6-(pyridoxal phosphate)lysine. Glu245 is a (6S)-5,6,7,8-tetrahydrofolate binding site.

This sequence belongs to the SHMT family. Homodimer. The cofactor is pyridoxal 5'-phosphate.

Its subcellular location is the cytoplasm. It catalyses the reaction 5,10-methylenetetrahydromethanopterin + glycine + H2O = 5,6,7,8-tetrahydromethanopterin + L-serine. It participates in amino-acid biosynthesis; glycine biosynthesis; glycine from L-serine: step 1/1. In terms of biological role, catalyzes the reversible interconversion of serine and glycine with tetrahydromethanopterin (H4MPT) serving as the one-carbon carrier. Also exhibits a pteridine-independent aldolase activity toward beta-hydroxyamino acids, producing glycine and aldehydes, via a retro-aldol mechanism. The sequence is that of Serine hydroxymethyltransferase from Methanobrevibacter smithii (strain ATCC 35061 / DSM 861 / OCM 144 / PS).